The primary structure comprises 265 residues: Glutamate racemase (265 aa).

Substrate-binding positions include 9–10 and 41–42; these read DS and YS. The active-site Proton donor/acceptor is Cys-73. 74–75 serves as a coordination point for substrate; it reads NT. Catalysis depends on Cys-184, which acts as the Proton donor/acceptor. 185-186 serves as a coordination point for substrate; that stretch reads TH.

The protein belongs to the aspartate/glutamate racemases family.

The catalysed reaction is L-glutamate = D-glutamate. It functions in the pathway cell wall biogenesis; peptidoglycan biosynthesis. In terms of biological role, provides the (R)-glutamate required for cell wall biosynthesis. In Actinobacillus pleuropneumoniae serotype 5b (strain L20), this protein is Glutamate racemase.